The following is a 356-amino-acid chain: DNA polymerase IV (356 aa).

Residues 7–188 (IIHIDMDAFY…IPVTKFYGVG (182 aa)) form the UmuC domain. Mg(2+) contacts are provided by Asp-11 and Asp-106. Glu-107 is an active-site residue.

This sequence belongs to the DNA polymerase type-Y family. As to quaternary structure, monomer. Mg(2+) is required as a cofactor.

Its subcellular location is the cytoplasm. It carries out the reaction DNA(n) + a 2'-deoxyribonucleoside 5'-triphosphate = DNA(n+1) + diphosphate. Functionally, poorly processive, error-prone DNA polymerase involved in untargeted mutagenesis. Copies undamaged DNA at stalled replication forks, which arise in vivo from mismatched or misaligned primer ends. These misaligned primers can be extended by PolIV. Exhibits no 3'-5' exonuclease (proofreading) activity. May be involved in translesional synthesis, in conjunction with the beta clamp from PolIII. The protein is DNA polymerase IV of Listeria welshimeri serovar 6b (strain ATCC 35897 / DSM 20650 / CCUG 15529 / CIP 8149 / NCTC 11857 / SLCC 5334 / V8).